We begin with the raw amino-acid sequence, 206 residues long: 2,3-bisphosphoglycerate-dependent phosphoglycerate mutase (206 aa).

Residues R9 to N16, T22 to G23, R61, E88 to Y91, K99, R115 to R116, and G159 to N160 each bind substrate. Catalysis depends on H10, which acts as the Tele-phosphohistidine intermediate. The active-site Proton donor/acceptor is the E88.

It belongs to the phosphoglycerate mutase family. BPG-dependent PGAM subfamily. Homodimer.

The catalysed reaction is (2R)-2-phosphoglycerate = (2R)-3-phosphoglycerate. It functions in the pathway carbohydrate degradation; glycolysis; pyruvate from D-glyceraldehyde 3-phosphate: step 3/5. In terms of biological role, catalyzes the interconversion of 2-phosphoglycerate and 3-phosphoglycerate. The sequence is that of 2,3-bisphosphoglycerate-dependent phosphoglycerate mutase from Bartonella bacilliformis (strain ATCC 35685 / KC583 / Herrer 020/F12,63).